We begin with the raw amino-acid sequence, 96 residues long: Small ribosomal subunit protein bS6 (96 aa).

Belongs to the bacterial ribosomal protein bS6 family.

Its function is as follows. Binds together with bS18 to 16S ribosomal RNA. In Streptococcus equi subsp. zooepidemicus (strain MGCS10565), this protein is Small ribosomal subunit protein bS6.